A 495-amino-acid polypeptide reads, in one-letter code: Altronate dehydratase (495 aa).

It belongs to the UxaA family. Requires Fe(2+) as cofactor. It depends on Mn(2+) as a cofactor.

The catalysed reaction is D-altronate = 2-dehydro-3-deoxy-D-gluconate + H2O. It functions in the pathway carbohydrate metabolism; pentose and glucuronate interconversion. Its activity is regulated as follows. Is inhibited by high concentrations of Fe(2+) (&gt; 2 mM), and by EDTA or other iron chelators in vitro. In terms of biological role, catalyzes the dehydration of D-altronate. In Escherichia coli (strain K12), this protein is Altronate dehydratase (uxaA).